Reading from the N-terminus, the 180-residue chain is Probable Brix domain-containing ribosomal biogenesis protein (180 aa).

The Brix domain occupies 1 to 178 (MTTSRRPSPR…KPAEMVKRGR (178 aa)).

Probably involved in the biogenesis of the ribosome. This chain is Probable Brix domain-containing ribosomal biogenesis protein, found in Aeropyrum pernix (strain ATCC 700893 / DSM 11879 / JCM 9820 / NBRC 100138 / K1).